Reading from the N-terminus, the 306-residue chain is Porphobilinogen deaminase (306 aa).

Cys234 is modified (S-(dipyrrolylmethanemethyl)cysteine).

This sequence belongs to the HMBS family. In terms of assembly, monomer. Dipyrromethane serves as cofactor.

It catalyses the reaction 4 porphobilinogen + H2O = hydroxymethylbilane + 4 NH4(+). It functions in the pathway porphyrin-containing compound metabolism; protoporphyrin-IX biosynthesis; coproporphyrinogen-III from 5-aminolevulinate: step 2/4. Its function is as follows. Tetrapolymerization of the monopyrrole PBG into the hydroxymethylbilane pre-uroporphyrinogen in several discrete steps. This chain is Porphobilinogen deaminase, found in Mycobacteroides abscessus (strain ATCC 19977 / DSM 44196 / CCUG 20993 / CIP 104536 / JCM 13569 / NCTC 13031 / TMC 1543 / L948) (Mycobacterium abscessus).